Consider the following 938-residue polypeptide: Collagen alpha-1(I) chain (938 aa).

A disordered region spans residues 1–938 (GGISVPGPMG…PGPPGPPGPP (938 aa)). Pro-18, Pro-21, Pro-24, Pro-33, Pro-36, Pro-39, Pro-54, Pro-69, Pro-75, Pro-84, and Pro-90 each carry 4-hydroxyproline. A compositionally biased stretch (low complexity) spans 26–45 (PQGFQGPPGEPGEPGASGPM). Residues 57 to 71 (NGDDGEAGKPGRPGE) are compositionally biased toward basic and acidic residues. A 5-hydroxylysine; alternate modification is found at Lys-93. Lys-93 carries an O-linked (Gal...) hydroxylysine; alternate glycan. Ser-99 carries the post-translational modification Phosphoserine. The segment covering 107 to 135 (DAGPAGPKGRPGASGPAGARGNDGATGAA) has biased composition (low complexity). 4-hydroxyproline is present on residues Pro-117, Pro-138, Pro-147, Pro-150, Pro-177, Pro-180, Pro-192, Pro-198, Pro-207, Pro-213, Pro-216, and Pro-231. Positions 137–149 (PPGPTGPAGPPGF) are enriched in pro residues. The segment covering 183-222 (AGAAGPAGNPGADGQPGAKGANGAPGIAGAPGFPGARGPS) has biased composition (low complexity). At Lys-234 the chain carries 5-hydroxylysine. Pro-240, Pro-243, Pro-255, Pro-264, Pro-279, Pro-285, Pro-294, and Pro-300 each carry 4-hydroxyproline. A compositionally biased stretch (gly residues) spans 289–298 (GERGGPGSRG). At Lys-309 the chain carries 5-hydroxylysine. A 4-hydroxyproline mark is found at Pro-314, Pro-323, Pro-329, Pro-335, Pro-344, Pro-347, Pro-356, Pro-365, Pro-371, Pro-383, Pro-392, Pro-401, Pro-404, Pro-422, Pro-439, Pro-445, Pro-451, Pro-458, Pro-464, Pro-476, Pro-485, Pro-497, Pro-503, Pro-509, and Pro-518. Over residues 338 to 364 (KGLTGSPGSPGPDGKTGPPGPAGQDGR) the composition is skewed to low complexity. The span at 373 to 392 (ARGQAGVMGFPGPKGAAGEP) shows a compositional bias: low complexity. Lys-530 carries the post-translational modification 5-hydroxylysine. 3 positions are modified to 4-hydroxyproline: Pro-536, Pro-551, and Pro-557. Over residues 563–577 (SGPSGPAGPTGARGA) the composition is skewed to low complexity. Ser-566 is subject to Phosphoserine. Pro-578, Pro-584, Pro-587, Pro-596, Pro-602, Pro-620, Pro-629, and Pro-638 each carry 4-hydroxyproline. Residues 590–617 (AGFAGPPGADGQPGAKGEPGDAGAKGDA) are compositionally biased toward low complexity. Pro residues predominate over residues 619-631 (PPGPAGPTGPPGP). Lys-641 is subject to 5-hydroxylysine. A compositionally biased stretch (low complexity) spans 646–662 (SAGPPGATGFPGAAGRV). A 4-hydroxyproline mark is found at Pro-650 and Pro-656. Position 664 is a 3-hydroxyproline (Pro-664). 15 positions are modified to 4-hydroxyproline: Pro-665, Pro-674, Pro-677, Pro-693, Pro-703, Pro-712, Pro-730, Pro-739, Pro-742, Pro-748, Pro-763, Pro-769, Pro-775, Pro-784, and Pro-790. The span at 762-772 (PPGPMGPPGLA) shows a compositional bias: pro residues. Lys-799 bears the 5-hydroxylysine mark. Residues 807–822 (PGPPGAPGAPGAPGPV) show a composition bias toward pro residues. Pro-810, Pro-813, and Pro-816 each carry 4-hydroxyproline. The segment covering 843–867 (AGPAGARGPAGPQGPRRGFSGLQGP) has biased composition (low complexity). 4-hydroxyproline is present on residues Pro-871, Pro-874, Pro-892, and Pro-907. Low complexity predominate over residues 874-907 (PGEQGPSGASGPAGPRGPPGSAGSPGKDGLNGLP). Pro-912 carries the 3-hydroxyproline modification. Position 913 is a 4-hydroxyproline (Pro-913). The segment covering 923–938 (VGPPGPPGPPGPPGPP) has biased composition (pro residues). Pro-925 is subject to 3-hydroxyproline. Pro-926 is modified (4-hydroxyproline). The residue at position 928 (Pro-928) is a 3-hydroxyproline. At Pro-929 the chain carries 4-hydroxyproline. The residue at position 931 (Pro-931) is a 3-hydroxyproline. A 4-hydroxyproline mark is found at Pro-932, Pro-935, and Pro-938.

Belongs to the fibrillar collagen family. In terms of assembly, trimers of one alpha 2(I) and two alpha 1(I) chains. In terms of processing, contains mostly 4-hydroxyproline. Proline residues at the third position of the tripeptide repeating unit (G-X-Y) are hydroxylated in some or all of the chains. Post-translationally, contains 3-hydroxyproline at a few sites. This modification occurs on the first proline residue in the sequence motif Gly-Pro-Hyp, where Hyp is 4-hydroxyproline. Lysine residues at the third position of the tripeptide repeating unit (G-X-Y) are 5-hydroxylated in some or all of the chains. In terms of processing, O-glycosylated on hydroxylated lysine residues. The O-linked glycan consists of a Glc-Gal disaccharide. Expressed in bones.

The protein localises to the secreted. Its subcellular location is the extracellular space. The protein resides in the extracellular matrix. Type I collagen is a member of group I collagen (fibrillar forming collagen). This Megalonyx jeffersonii (Jefferson's ground sloth) protein is Collagen alpha-1(I) chain.